Here is a 443-residue protein sequence, read N- to C-terminus: Serine/threonine-protein kinase 40 (443 aa).

Over residues 1 to 11 (MKRRASERDAG) the composition is skewed to basic and acidic residues. Positions 1–26 (MKRRASERDAGETSARSKALCSSISG) are disordered. A compositionally biased stretch (polar residues) spans 14–26 (SARSKALCSSISG). The 298-residue stretch at 35 to 332 (FILGPRLGNS…EVLESLGAII (298 aa)) folds into the Protein kinase domain. ATP-binding positions include 41–49 (LGNSPVPSI) and lysine 66. Catalysis depends on aspartate 197, which acts as the Proton acceptor.

This sequence belongs to the protein kinase superfamily. CAMK Ser/Thr protein kinase family.

The protein resides in the nucleus. Its subcellular location is the cytoplasm. It catalyses the reaction L-seryl-[protein] + ATP = O-phospho-L-seryl-[protein] + ADP + H(+). The enzyme catalyses L-threonyl-[protein] + ATP = O-phospho-L-threonyl-[protein] + ADP + H(+). Its function is as follows. May be a negative regulator of NF-kappa-B and p53-mediated gene transcription. This Xenopus tropicalis (Western clawed frog) protein is Serine/threonine-protein kinase 40 (stk40).